Reading from the N-terminus, the 403-residue chain is Dynactin subunit 2-B (403 aa).

Positions 1-26 are disordered; the sequence is MADPKYADLPGIARNEPDLYETSDLP. Positions 99–132 form a coiled coil; that stretch reads PQQKYQRLLHEVQELTQEVEKTQSTLKESATEEK. The interval 183 to 206 is disordered; sequence AAKTRKDPEGKSSAKGPGPDNENL. The span at 184-194 shows a compositional bias: basic and acidic residues; the sequence is AKTRKDPEGKS. The stretch at 381 to 401 forms a coiled coil; it reads KENLATVEDNFSSIDGRIKKL.

This sequence belongs to the dynactin subunit 2 family. As to quaternary structure, subunit of dynactin, a multiprotein complex part of a tripartite complex with dynein and a adapter, such as BICDL1, BICD2 or HOOK3. The dynactin complex is built around ACTR1A/ACTB filament and consists of an actin-related filament composed of a shoulder domain, a pointed end and a barbed end. Its length is defined by its flexible shoulder domain. The soulder is composed of 2 DCTN1 subunits, 4 DCTN2 and 2 DCTN3.

The protein resides in the cytoplasm. It localises to the cytoskeleton. The protein localises to the microtubule organizing center. It is found in the centrosome. Its subcellular location is the membrane. Its function is as follows. Part of the dynactin complex that activates the molecular motor dynein for ultra-processive transport along microtubules. In the dynactin soulder domain, binds the ACTR1A filament and acts as a molecular ruler to determine the length. Modulates cytoplasmic dynein binding to an organelle, and plays a role in prometaphase chromosome alignment and spindle organization during mitosis. Involved in anchoring microtubules to centrosomes. The polypeptide is Dynactin subunit 2-B (dctn2-b) (Xenopus laevis (African clawed frog)).